Reading from the N-terminus, the 141-residue chain is Nucleoside diphosphate kinase (141 aa).

ATP is bound by residues K11, F59, R87, T93, R104, and N114. The active-site Pros-phosphohistidine intermediate is the H117.

Belongs to the NDK family. As to quaternary structure, homotetramer. Mg(2+) is required as a cofactor.

It localises to the cytoplasm. The enzyme catalyses a 2'-deoxyribonucleoside 5'-diphosphate + ATP = a 2'-deoxyribonucleoside 5'-triphosphate + ADP. It carries out the reaction a ribonucleoside 5'-diphosphate + ATP = a ribonucleoside 5'-triphosphate + ADP. In terms of biological role, major role in the synthesis of nucleoside triphosphates other than ATP. The ATP gamma phosphate is transferred to the NDP beta phosphate via a ping-pong mechanism, using a phosphorylated active-site intermediate. This Ralstonia nicotianae (strain ATCC BAA-1114 / GMI1000) (Ralstonia solanacearum) protein is Nucleoside diphosphate kinase.